We begin with the raw amino-acid sequence, 37 residues long: Large ribosomal subunit protein bL36 (37 aa).

It belongs to the bacterial ribosomal protein bL36 family.

The chain is Large ribosomal subunit protein bL36 from Synechococcus elongatus (strain ATCC 33912 / PCC 7942 / FACHB-805) (Anacystis nidulans R2).